The primary structure comprises 209 residues: Chalcone isomerase-like protein 2 (209 aa).

It belongs to the chalcone isomerase family. Component an active demethylxanthohumol (DMX) biosynthetic metabolon in glandular trichomes (lupulin glands) that encompasses a chalcone synthase (CHS) and a membrane-bound prenyltransferase. Interacts with CHS_H1 and PT1L. In terms of tissue distribution, mostly expressed in glandular trichomes (lupulin glands), and, to a lower extent, in cones, cones bracts, leaves, stems and roots.

Its subcellular location is the cytoplasm. It catalyses the reaction a chalcone = a flavanone.. It functions in the pathway secondary metabolite biosynthesis; flavonoid biosynthesis. Its function is as follows. Involved in the biosynthesis of prenylated phenolics natural products which contribute to the bitter taste of beer and display broad biological activities. Involved in anthocyanin biosynthesis. Polyketide binding proteins (PBP) which promotes the catalytic activities of CHS_H1 and PT1L and triggers demethylxanthohumol (DMX) production. The protein is Chalcone isomerase-like protein 2 of Humulus lupulus (European hop).